A 361-amino-acid polypeptide reads, in one-letter code: Phospho-N-acetylmuramoyl-pentapeptide-transferase (361 aa).

10 helical membrane passes run 25–45, 73–93, 98–118, 139–159, 168–188, 200–220, 237–257, 264–284, 289–309, and 339–359; these read RGILAALTALFLSLWMGPAVI, TMGGSLILLTVTLSVLLWGDL, VWLVLAVMICFGAIGWYDDWI, IFGLAAGLFLYYTADVPAAIT, IALPLAGVSFVVIAYFWIVGF, GLAIMPTVLVACALGVFAYAS, AGELIIICSAIAGAGLGFLWF, VFMGDIGALSLGAVLGTIAVI, MVLVIMGGVFVIETLSVMIQV, and VIVRFWIISVVLVLIGLATLK.

It belongs to the glycosyltransferase 4 family. MraY subfamily. The cofactor is Mg(2+).

It localises to the cell inner membrane. It catalyses the reaction UDP-N-acetyl-alpha-D-muramoyl-L-alanyl-gamma-D-glutamyl-meso-2,6-diaminopimeloyl-D-alanyl-D-alanine + di-trans,octa-cis-undecaprenyl phosphate = di-trans,octa-cis-undecaprenyl diphospho-N-acetyl-alpha-D-muramoyl-L-alanyl-D-glutamyl-meso-2,6-diaminopimeloyl-D-alanyl-D-alanine + UMP. It functions in the pathway cell wall biogenesis; peptidoglycan biosynthesis. Catalyzes the initial step of the lipid cycle reactions in the biosynthesis of the cell wall peptidoglycan: transfers peptidoglycan precursor phospho-MurNAc-pentapeptide from UDP-MurNAc-pentapeptide onto the lipid carrier undecaprenyl phosphate, yielding undecaprenyl-pyrophosphoryl-MurNAc-pentapeptide, known as lipid I. The protein is Phospho-N-acetylmuramoyl-pentapeptide-transferase of Xanthomonas axonopodis pv. citri (strain 306).